The sequence spans 375 residues: Squamosa promoter-binding-like protein 9 (375 aa).

2 disordered regions span residues 1-30 (MEMGSNSGPGHGPGQAESGGSSTESSSFSG) and 43-73 (GGGGSGSSSSGGRSNRRVRGGGSGQSGQIPR). A compositionally biased stretch (low complexity) spans 18–30 (SGGSSTESSSFSG). The SBP-type zinc-finger motif lies at 71 to 148 (IPRCQVEGCG…AGHNERRRKP (78 aa)). 8 residues coordinate Zn(2+): cysteine 74, cysteine 79, cysteine 96, histidine 99, cysteine 115, cysteine 118, histidine 122, and cysteine 134. A Bipartite nuclear localization signal motif is present at residues 131-147 (KRSCRRRLAGHNERRRK). Disordered regions lie at residues 252–278 (LLSNPHQPHDNNNNNNNNNNNNNNTWR) and 345–375 (SDHHHQSRRQYMEDENTRAYDSSSHHTNWSL). Over residues 262-275 (NNNNNNNNNNNNNN) the composition is skewed to low complexity. The span at 345–362 (SDHHHQSRRQYMEDENTR) shows a compositional bias: basic and acidic residues. The segment covering 363–375 (AYDSSSHHTNWSL) has biased composition (polar residues).

Zn(2+) serves as cofactor.

It localises to the nucleus. Its subcellular location is the cytoplasm. Functionally, trans-acting factor that binds specifically to the consensus nucleotide sequence 5'-TNCGTACAA-3'. The chain is Squamosa promoter-binding-like protein 9 (SPL9) from Arabidopsis thaliana (Mouse-ear cress).